Here is a 146-residue protein sequence, read N- to C-terminus: Gonadotropin subunit beta-2 (146 aa).

The signal sequence occupies residues 1–22; that stretch reads MTVEISKVFVLMMLNLFLGASS. 6 cysteine pairs are disulfide-bonded: cysteine 37/cysteine 85, cysteine 51/cysteine 100, cysteine 54/cysteine 138, cysteine 62/cysteine 116, cysteine 66/cysteine 118, and cysteine 121/cysteine 128. N-linked (GlcNAc...) asparagine glycosylation occurs at asparagine 41.

This sequence belongs to the glycoprotein hormones subunit beta family. Heterodimer of an alpha and a beta chain.

The protein resides in the secreted. In terms of biological role, involved in gametogenesis and steroidogenesis. The sequence is that of Gonadotropin subunit beta-2 (cgbb) from Trichopodus trichopterus (Three spot gourami).